The primary structure comprises 400 residues: DNA polymerase IV (400 aa).

In terms of domain architecture, UmuC spans 5–187; it reads IFLVDMNAFF…LPVEFMNGIG (183 aa). Mg(2+) is bound by residues D9 and D105. E106 is a catalytic residue.

Belongs to the DNA polymerase type-Y family. Monomer. Mg(2+) serves as cofactor.

The protein localises to the cytoplasm. The enzyme catalyses DNA(n) + a 2'-deoxyribonucleoside 5'-triphosphate = DNA(n+1) + diphosphate. Poorly processive, error-prone DNA polymerase involved in untargeted mutagenesis. Copies undamaged DNA at stalled replication forks, which arise in vivo from mismatched or misaligned primer ends. These misaligned primers can be extended by PolIV. Exhibits no 3'-5' exonuclease (proofreading) activity. May be involved in translesional synthesis, in conjunction with the beta clamp from PolIII. The sequence is that of DNA polymerase IV from Clostridium kluyveri (strain ATCC 8527 / DSM 555 / NBRC 12016 / NCIMB 10680 / K1).